Here is a 241-residue protein sequence, read N- to C-terminus: MRKSVIAGNWKMHMTCAEAKSYLEEFIPLIKNIKDDRKVVIAPPFTAISTFSDHSDFEYLDISSQNIHWEDQGAFTAEISPKMLLEHGVSYAIVGHSEPRKYFSESDEQINKRAVFAQSSGLTPIVCVGETLEQRERGEADRVITRQVEQGLENTDPSNLIVAYEPIWAIGTGKTCEAEDANKICSLIRKLIGFDDVIIQYGGSVKPNNIDEIMSMSDIDGVLVGGASLDPNSFARIANYQ.

9-11 (NWK) contacts substrate. His-96 (electrophile) is an active-site residue. Glu-165 serves as the catalytic Proton acceptor. Substrate-binding positions include Gly-171, Ser-204, and 225-226 (GG).

The protein belongs to the triosephosphate isomerase family. Homodimer.

The protein localises to the cytoplasm. It carries out the reaction D-glyceraldehyde 3-phosphate = dihydroxyacetone phosphate. It participates in carbohydrate biosynthesis; gluconeogenesis. It functions in the pathway carbohydrate degradation; glycolysis; D-glyceraldehyde 3-phosphate from glycerone phosphate: step 1/1. In terms of biological role, involved in the gluconeogenesis. Catalyzes stereospecifically the conversion of dihydroxyacetone phosphate (DHAP) to D-glyceraldehyde-3-phosphate (G3P). The sequence is that of Triosephosphate isomerase from Prochlorococcus marinus (strain MIT 9301).